Consider the following 194-residue polypeptide: Imidazoleglycerol-phosphate dehydratase (194 aa).

The protein belongs to the imidazoleglycerol-phosphate dehydratase family.

The protein localises to the cytoplasm. The enzyme catalyses D-erythro-1-(imidazol-4-yl)glycerol 3-phosphate = 3-(imidazol-4-yl)-2-oxopropyl phosphate + H2O. Its pathway is amino-acid biosynthesis; L-histidine biosynthesis; L-histidine from 5-phospho-alpha-D-ribose 1-diphosphate: step 6/9. The protein is Imidazoleglycerol-phosphate dehydratase of Bacillus cereus (strain G9842).